Consider the following 165-residue polypeptide: Protein SprT (165 aa).

The SprT-like domain occupies 22-163 (LAQANLKLGC…RCVHCGEQLV (142 aa)). Histidine 78 contacts Zn(2+). The active site involves glutamate 79. Histidine 82 is a Zn(2+) binding site.

This sequence belongs to the SprT family. It depends on Zn(2+) as a cofactor.

The protein localises to the cytoplasm. The chain is Protein SprT from Shigella dysenteriae serotype 1 (strain Sd197).